The following is a 333-amino-acid chain: Phosphate acyltransferase (333 aa).

Belongs to the PlsX family. Homodimer. Probably interacts with PlsY.

The protein localises to the cytoplasm. It catalyses the reaction a fatty acyl-[ACP] + phosphate = an acyl phosphate + holo-[ACP]. It functions in the pathway lipid metabolism; phospholipid metabolism. Catalyzes the reversible formation of acyl-phosphate (acyl-PO(4)) from acyl-[acyl-carrier-protein] (acyl-ACP). This enzyme utilizes acyl-ACP as fatty acyl donor, but not acyl-CoA. This is Phosphate acyltransferase from Lactobacillus gasseri (strain ATCC 33323 / DSM 20243 / BCRC 14619 / CIP 102991 / JCM 1131 / KCTC 3163 / NCIMB 11718 / NCTC 13722 / AM63).